A 452-amino-acid polypeptide reads, in one-letter code: Phosphoglucosamine mutase (452 aa).

Ser-104 acts as the Phosphoserine intermediate in catalysis. Residues Ser-104, Asp-246, Asp-248, and Asp-250 each coordinate Mg(2+). Ser-104 bears the Phosphoserine mark.

The protein belongs to the phosphohexose mutase family. Mg(2+) is required as a cofactor. Activated by phosphorylation.

It catalyses the reaction alpha-D-glucosamine 1-phosphate = D-glucosamine 6-phosphate. Catalyzes the conversion of glucosamine-6-phosphate to glucosamine-1-phosphate. This Streptomyces avermitilis (strain ATCC 31267 / DSM 46492 / JCM 5070 / NBRC 14893 / NCIMB 12804 / NRRL 8165 / MA-4680) protein is Phosphoglucosamine mutase.